An 808-amino-acid polypeptide reads, in one-letter code: Glutamate receptor 1.1 (808 aa).

The N-terminal stretch at 1-19 (MEILFSISILALLFSGVVA) is a signal peptide. The Extracellular portion of the chain corresponds to 20–541 (APSDDDVFEE…MWTFFDPFEK (522 aa)). N-linked (GlcNAc...) asparagine glycans are attached at residues Asn-288, Asn-339, and Asn-504. Residues 542-562 (SLWLASGAFFVLTGIVVWLVE) form a helical membrane-spanning segment. Residues 563–570 (RSVNPEFQ) lie on the Cytoplasmic side of the membrane. Residues 571–591 (GSWGQQLSMMLWFGFSTIVFA) form a helical membrane-spanning segment. Over 592 to 602 (HREKLQKMSSR) the chain is Cytoplasmic. The chain crosses the membrane as a helical span at residues 603-623 (FLVIVWVFVVLILTSSYSANL). The Extracellular segment spans residues 624–771 (TSTKTISRMQ…SKRFTFRELR (148 aa)). A helical transmembrane segment spans residues 772–792 (GLFIIAGAAHVLVLALHLFHT). Over 793–808 (RQEVSRLCTKLQSFYK) the chain is Cytoplasmic.

It belongs to the glutamate-gated ion channel (TC 1.A.10.1) family. As to quaternary structure, may form heteromers. In terms of tissue distribution, expressed predominantly in roots. First detected in the root-shoot junction, and later in lateral roots and at the margin of matures leaves.

The protein resides in the membrane. Functionally, glutamate-gated receptor that probably acts as a non-selective cation channel. Can transport sodium, potassium, and calcium ions. Functions as a carbon and nitrogen regulator and/or sensor that regulates carbon and nitrogen metabolism and distinct physiological process such as germination through the control of acid abscisic (ABA) biosynthesis. May be involved in light-signal transduction and calcium homeostasis via the regulation of calcium influx into cells. Seems required for the regulation of the abscisic acid (ABA) signaling pathway that modulates many aspects of plant physiology such as seed germination and response to drought (e.g. stomata opening). This chain is Glutamate receptor 1.1 (GLR1.1), found in Arabidopsis thaliana (Mouse-ear cress).